A 158-amino-acid chain; its full sequence is Ribosome maturation factor RimP (158 aa).

This sequence belongs to the RimP family.

It localises to the cytoplasm. Its function is as follows. Required for maturation of 30S ribosomal subunits. The chain is Ribosome maturation factor RimP from Lactobacillus acidophilus (strain ATCC 700396 / NCK56 / N2 / NCFM).